We begin with the raw amino-acid sequence, 603 residues long: Geraniol synthase, chloroplastic (603 aa).

The transit peptide at 1–35 (MSSISQKVVIGLNKAAANNNLQNLDRRGFKTRCVS) directs the protein to the chloroplast. Residues arginine 319, aspartate 356, aspartate 360, arginine 497, and aspartate 500 each contribute to the (2E)-geranyl diphosphate site. Mg(2+) is bound by residues aspartate 356 and aspartate 360. Residues 356-360 (DDVYD) carry the DDXXD motif motif. Residues aspartate 500, threonine 504, and glutamate 508 each contribute to the Mg(2+) site.

This sequence belongs to the terpene synthase family. Tpsb subfamily. In terms of assembly, monomer. Mg(2+) is required as a cofactor. It depends on Mn(2+) as a cofactor.

The protein localises to the plastid. It localises to the chloroplast. It catalyses the reaction (2E)-geranyl diphosphate + H2O = (2E)-geraniol + diphosphate. The protein operates within secondary metabolite biosynthesis; terpenoid biosynthesis. In terms of biological role, monoterpene synthase (mono-TPS) involved in the biosynthesis of monoterpenes natural products. Catalyzes the conversion of (2E)-geranyl diphosphate (GPP) into geraniol. This is Geraniol synthase, chloroplastic from Perilla frutescens var. hirtella (Perilla citriodora).